A 354-amino-acid polypeptide reads, in one-letter code: MSKVKSITRESWILSTFPEWGSWLNEEIEQEQVAPGTFAMWWLGCTGIWLKSEGGTNVCVDFWCGTGKQSHGNPLMKQGHQMQRMAGVKKLQPNLRTTPFVLDPFAIRQIDAVLATHDHNDHIDVNVAAAVMQNCADDVPFIGPKTCVDLWIGWGVPKERCIVVKPGDVVKVKDIEIHALDAFDRTALITLPADQKAAGVLPDGMDDRAVNYLFKTPGGSLYHSGDSHYSNYYAKHGNEHQIDVALGSYGENPRGITDKMTSADMLRMGEALNAKVVIPFHHDIWSNFQADPQEIRVLWEIKKDRLKYGFKPFIWQVGGKFTWPLDKDNFEYHYPRGFDDCFTIEPDLPFKSFL.

This sequence belongs to the UlaG family. A divalent metal cation is required as a cofactor.

It is found in the cytoplasm. The catalysed reaction is L-ascorbate 6-phosphate + H2O = 3-dehydro-L-gulonate 6-phosphate. The protein operates within cofactor degradation; L-ascorbate degradation; D-xylulose 5-phosphate from L-ascorbate: step 1/4. Functionally, probably catalyzes the hydrolysis of L-ascorbate-6-P into 3-keto-L-gulonate-6-P. Is essential for L-ascorbate utilization under anaerobic conditions. This is Probable L-ascorbate-6-phosphate lactonase UlaG from Shigella flexneri.